The sequence spans 560 residues: Kinesin light chain 1 (560 aa).

Residues 27-156 (KTKQVIQGLE…HLEFMNQLKK (130 aa)) adopt a coiled-coil conformation. Residues 156–176 (KYDDDISPSEDKDSDSSKEPL) are compositionally biased toward basic and acidic residues. Positions 156–203 (KYDDDISPSEDKDSDSSKEPLDDLFPNDEDDPGQGIQQQHSSAAAAAQ) are disordered. The residue at position 162 (Ser162) is a Phosphoserine. Over residues 188-203 (GQGIQQQHSSAAAAAQ) the composition is skewed to low complexity. 5 TPR repeats span residues 213–246 (LRTLHNLVIQYASQGRYEVAVPLCKQALEDLEKT), 255–288 (ATMLNILALVYRDQNKYKDAANLLNDALAIREKT), 297–330 (AATLNNLAVLYGKRGKYKEAEPLCKRALEIREKV), 339–372 (AKQLNNLALLCQNQGKYEEVEYYYQRALEIYQTK), and 381–414 (AKTKNNLASCYLKQGKFKQAETLYKEILTRAHER). Tyr449 is subject to Phosphotyrosine. Ser460 bears the Phosphoserine mark. The stretch at 464–497 (TTTLKNLGALYRRQGKFEAAETLEEAALRSRKQG) is one TPR 6 repeat. A phosphoserine mark is found at Ser521 and Ser524.

Belongs to the kinesin light chain family. As to quaternary structure, oligomeric complex composed of two heavy chains and two light chains. Interacts with SPAG9. Interacts with ATCAY; may link mitochondria to KLC1 and regulate mitochondria localization into neuron projections. Interacts (via TPR repeats) with TOR1A; the interaction associates TOR1A with the kinesin oligomeric complex. Interacts with BORCS5. Interacts with MAPK8IP3/JIP3 and NTRK2/TRKB; interaction with NTRK2/TRKB is mediated by MAPK8IP3/JIP3. Interacts with CLSTN1; phosphorylation at Ser-460 inhibits interaction with CLSTN1. In terms of processing, phosphorylation at Ser-460 by ERK inhibits interaction with CLSTN1 and localization to cytoplasmic vesicles. In terms of tissue distribution, expressed in brain (at protein level).

The protein resides in the cell projection. It localises to the growth cone. It is found in the cytoplasmic vesicle. The protein localises to the cytoplasm. Its subcellular location is the cytoskeleton. In terms of biological role, kinesin is a microtubule-associated force-producing protein that may play a role in organelle transport. The light chain may function in coupling of cargo to the heavy chain or in the modulation of its ATPase activity. This Rattus norvegicus (Rat) protein is Kinesin light chain 1 (Klc1).